We begin with the raw amino-acid sequence, 341 residues long: tRNA N6-adenosine threonylcarbamoyltransferase (341 aa).

2 residues coordinate Fe cation: His111 and His115. Residues Leu134 to Gly138, Asp167, Gly180, and Asn272 contribute to the substrate site. Asp300 contacts Fe cation.

It belongs to the KAE1 / TsaD family. It depends on Fe(2+) as a cofactor.

The protein localises to the cytoplasm. The catalysed reaction is L-threonylcarbamoyladenylate + adenosine(37) in tRNA = N(6)-L-threonylcarbamoyladenosine(37) in tRNA + AMP + H(+). Functionally, required for the formation of a threonylcarbamoyl group on adenosine at position 37 (t(6)A37) in tRNAs that read codons beginning with adenine. Is involved in the transfer of the threonylcarbamoyl moiety of threonylcarbamoyl-AMP (TC-AMP) to the N6 group of A37, together with TsaE and TsaB. TsaD likely plays a direct catalytic role in this reaction. The polypeptide is tRNA N6-adenosine threonylcarbamoyltransferase (Blochmanniella pennsylvanica (strain BPEN)).